The chain runs to 564 residues: Interactor of constitutive active ROPs 3 (564 aa).

Disordered regions lie at residues 1 to 73 and 88 to 135; these read MQTQ…SRIT and KAKD…SALE. A compositionally biased stretch (polar residues) spans 33–44; sequence ESSSSPISATNR. Composition is skewed to basic and acidic residues over residues 63-73 and 98-123; these read VSEKKRPSRIT and TSKK…KLEE. Coiled coils occupy residues 70-133 and 231-514; these read SRIT…ETSA and AETE…AATA. At Ser533 the chain carries Phosphoserine.

The protein belongs to the ICR family. In terms of assembly, interacts with ARAC11 in vitro. As to expression, expressed in flowers.

Its function is as follows. Acts as a scaffold, mediating interaction of ROPs with different proteins. The chain is Interactor of constitutive active ROPs 3 (ICR3) from Arabidopsis thaliana (Mouse-ear cress).